The sequence spans 363 residues: Cleavage and termination factor 1 (363 aa).

Residues 7-85 form the RRM domain; that stretch reads NVVFVGNIPY…RKIRVEFPSN (79 aa). A disordered region spans residues 291 to 325; it reads QPASATSSPPSVPQKIPSSNHKSQQANGSDQGNEG. Positions 306–322 are enriched in polar residues; the sequence is IPSSNHKSQQANGSDQG.

As to quaternary structure, interacts with res2.

It localises to the nucleus. In terms of biological role, component of the cleavage factor I (CF I) involved in pre-mRNA 3'-end processing. The sequence is that of Cleavage and termination factor 1 (ctf1) from Schizosaccharomyces pombe (strain 972 / ATCC 24843) (Fission yeast).